The following is a 296-amino-acid chain: tRNA uridine(34) hydroxylase (296 aa).

In terms of domain architecture, Rhodanese spans 121–215 (AQPDVAVIDT…YLEDIPQDQS (95 aa)). Cys-175 (cysteine persulfide intermediate) is an active-site residue.

This sequence belongs to the TrhO family.

The catalysed reaction is uridine(34) in tRNA + AH2 + O2 = 5-hydroxyuridine(34) in tRNA + A + H2O. Functionally, catalyzes oxygen-dependent 5-hydroxyuridine (ho5U) modification at position 34 in tRNAs. The protein is tRNA uridine(34) hydroxylase of Roseobacter denitrificans (strain ATCC 33942 / OCh 114) (Erythrobacter sp. (strain OCh 114)).